Consider the following 359-residue polypeptide: DNA replication and repair protein RecF (359 aa).

30-37 (GQNAQGKT) contributes to the ATP binding site.

The protein belongs to the RecF family.

It is found in the cytoplasm. Its function is as follows. The RecF protein is involved in DNA metabolism; it is required for DNA replication and normal SOS inducibility. RecF binds preferentially to single-stranded, linear DNA. It also seems to bind ATP. This is DNA replication and repair protein RecF from Lactococcus lactis subsp. cremoris (strain SK11).